The chain runs to 251 residues: Ell1-associated factor 1 (251 aa).

Disordered stretches follow at residues 110-187 (SKTV…DMEV) and 201-251 (FDQE…EDED). Positions 112–123 (TVPSNAITQSDN) are enriched in polar residues. The span at 124 to 135 (SQISESKSTSQS) shows a compositional bias: low complexity. Residues 143–157 (RRKEKELEASKDGKI) show a composition bias toward basic and acidic residues. Composition is skewed to polar residues over residues 204 to 220 (EFNS…TASK) and 236 to 251 (SSAQ…EDED). Serine 247 carries the post-translational modification Phosphoserine.

It belongs to the EAF family. Forms a stable heterodimer with ell1. Ell1-eaf1 complex interacts with RNA polymerase II.

The protein localises to the nucleus. Activates transcription elongation by RNA polymerase II and pyrophosphorolysis as a complex with ell1. Acts as a transcriptional transactivator of ell1 elongation activities. The chain is Ell1-associated factor 1 (eaf1) from Schizosaccharomyces pombe (strain 972 / ATCC 24843) (Fission yeast).